A 92-amino-acid polypeptide reads, in one-letter code: DNA/RNA-binding protein Alba (92 aa).

K11 is modified (N6-acetyllysine).

The protein belongs to the histone-like Alba family. Acetylated. Acetylation at Lys-11 decreases DNA-binding affinity.

It is found in the cytoplasm. Its subcellular location is the chromosome. Functionally, binds double-stranded DNA tightly but without sequence specificity. Involved in DNA compaction. The polypeptide is DNA/RNA-binding protein Alba (Pyrobaculum islandicum (strain DSM 4184 / JCM 9189 / GEO3)).